The following is a 990-amino-acid chain: Translation initiation factor IF-2 (990 aa).

Residues 92-402 (KKRTFVKRDD…QRDEHLQAAP (311 aa)) form a disordered region. Composition is skewed to low complexity over residues 104 to 116 (EGAA…AAFA) and 131 to 151 (EAPA…AAPA). Positions 158–201 (ELARREEQARHQAELIRRQEAELAAKRAAREAREKREREAEERA) are enriched in basic and acidic residues. Low complexity predominate over residues 223 to 243 (TREQAAEATARNAAQLQARAK). Residues 244–264 (AAAESKARSDEEAARAADLDA) show a composition bias toward basic and acidic residues. Low complexity-rich tracts occupy residues 281-290 (ATPKKAVMVA) and 318-342 (PAVG…PGAG). 2 stretches are compositionally biased toward basic and acidic residues: residues 358-368 (PAKKKEIKTRG) and 386-398 (RRGD…DEHL). The 170-residue stretch at 490–659 (PRAPVVTVMG…LLQADVMELK (170 aa)) folds into the tr-type G domain. The tract at residues 499–506 (GHVDHGKT) is G1. Residue 499–506 (GHVDHGKT) participates in GTP binding. The G2 stretch occupies residues 524-528 (GITQH). The G3 stretch occupies residues 545–548 (DTPG). GTP-binding positions include 545–549 (DTPGH) and 599–602 (TKAD). The segment at 599-602 (TKAD) is G4. The interval 635-637 (SSK) is G5.

It belongs to the TRAFAC class translation factor GTPase superfamily. Classic translation factor GTPase family. IF-2 subfamily.

It localises to the cytoplasm. Its function is as follows. One of the essential components for the initiation of protein synthesis. Protects formylmethionyl-tRNA from spontaneous hydrolysis and promotes its binding to the 30S ribosomal subunits. Also involved in the hydrolysis of GTP during the formation of the 70S ribosomal complex. The protein is Translation initiation factor IF-2 of Verminephrobacter eiseniae (strain EF01-2).